Reading from the N-terminus, the 199-residue chain is Recombination protein RecR (199 aa).

The C4-type zinc finger occupies 57 to 72 (CQSCRTFTEETYCPIC). Residues 81–176 (SVICVVETPA…AVSRIAHGVP (96 aa)) enclose the Toprim domain.

The protein belongs to the RecR family.

Its function is as follows. May play a role in DNA repair. It seems to be involved in an RecBC-independent recombinational process of DNA repair. It may act with RecF and RecO. This Shewanella piezotolerans (strain WP3 / JCM 13877) protein is Recombination protein RecR.